A 113-amino-acid polypeptide reads, in one-letter code: Protein ORF3 (113 aa).

Hydrophobic stretches follow at residues 1–21 and 32–52; these read MGSP…CLCC and AVVG…GLIL. An interaction with host HPX region spans residues 27–67; it reads ASRLAAVVGGAAAVPAVVSGVTGLILSPSPSPIFIQPTPSP. Positions 47–71 are interaction with the capsid protein; sequence VTGLILSPSPSPIFIQPTPSPPMSF. Position 70 is a phosphoserine; by host (Ser-70). The homodimerization, and interaction with host AMBP/bikunin stretch occupies residues 71-113; that stretch reads FHNPGLELALDSRPAPLXPLGVTSPSAPPLPPVVDLPQLGLRR. Residues 90–113 form a disordered region; it reads LGVTSPSAPPLPPVVDLPQLGLRR. Positions 94 to 103 are interaction with host SRC, HCK, FYN, PIK3R3 and GRB2; that stretch reads SPSAPPLPPV. The PTAP/PSAP motif motif lies at 95 to 98; the sequence is PSAP.

The protein belongs to the hepevirus ORF3 protein family. As to quaternary structure, forms homooligomers. Interacts with host SRC, HCK, FYN, PIK3R3 and GRB2 (via SH3 domain); binding does not activate the kinases. Interacts with host AMBP/bikunin and AMBP/alpha-1-microglobulin peptides. Interacts with host HPX/hemopexin. Interacts (when phosphorylated) with capsid protein ORF2. Interacts with host TSG101; this interaction plays a role in viral release from the host cell. Interacts with host SIRPA; this interaction down-regulates the phosphorylation of host IRF3. Post-translationally, palmitoylated in the N-terminus.

The protein resides in the host endoplasmic reticulum membrane. It is found in the host cytoplasm. It localises to the host cytoskeleton. The protein localises to the virion. Its subcellular location is the host cell membrane. Functionally, small multifunctional phosphoprotein involved in virion morphogenesis, egress and counteracting host innate immunity. Plays critical roles in the final steps of viral release by interacting with host TSG101, a member of the vacuolar protein-sorting pathway and using other cellular host proteins involved in vesicle formation pathway. Also acts as a viroporin and forms ion conductive pores allowing viral particle release. Impairs the generation of type I interferon by down-regulating host TLR3 and TLR7 as well as their downstream signaling pathways. Down-regulates the phosphorylation of host IRF3 via the interaction with host SIRP-alpha, thereby inhibiting IFN-I expression. Interacts with host microtubules. The protein is Protein ORF3 of Hepatitis E virus genotype 3 (isolate Human/United States/US2) (HEV-3).